The sequence spans 338 residues: Histone acetyltransferase SAS2 (338 aa).

Positions 1 to 15 (MARSLSQSLTATTQK) are enriched in polar residues. Positions 1 to 31 (MARSLSQSLTATTQKLKGKKNGGKGKNKPSA) are disordered. Basic residues predominate over residues 16–31 (LKGKKNGGKGKNKPSA). In terms of domain architecture, MYST-type HAT spans 45–338 (LNERNIRQIQ…LKDEYLLIDD (294 aa)). Residues 100–126 (LFVCEYCFKYTDDQTRFVGHVASCPFQ) form a C2HC MYST-type zinc finger. The residue at position 168 (Lys168) is an N6-acetyllysine; by autocatalysis. Acetyl-CoA-binding positions include 209-211 (ILI) and 216-222 (QRRGLGL). Glu242 functions as the Proton donor/acceptor in the catalytic mechanism. 2 residues coordinate acetyl-CoA: Ser246 and Lys323.

It belongs to the MYST (SAS/MOZ) family. In terms of assembly, interacts with CAC1. Component of the SAS complex, at least composed of SAS2, SAS4 and SAS5. These three proteins constitute the core of the complex and are sufficient to acetylate histones. SAS4 is essential for HAT activity of the complex, while SAS5 is required for maxiaml HAT activity. Autoacetylation at Lys-168 is required for proper function.

Its subcellular location is the cytoplasm. The protein resides in the nucleus. The catalysed reaction is L-lysyl-[protein] + acetyl-CoA = N(6)-acetyl-L-lysyl-[protein] + CoA + H(+). In terms of biological role, histone acetyltransferase (HAT) subunit of the SAS complex, a multiprotein complex that acetylates 'Lys-16' of histone H4 and 'Lys-14' of histone H3. The SAS complex is however unable to acetylate nucleosomal histones. The complex is involved in transcriptional silencing at telomeres and at HML locus. Also involved in rDNA silencing and G0 control. This Saccharomyces cerevisiae (strain ATCC 204508 / S288c) (Baker's yeast) protein is Histone acetyltransferase SAS2 (SAS2).